The chain runs to 252 residues: Gastrula zinc finger protein XlCGF28.1 (252 aa).

C2H2-type zinc fingers lie at residues 6–28, 34–56, 62–84, 90–112, 118–140, 146–168, 174–196, 202–224, and 230–252; these read FTCN…LRSH, FTCS…FRGH, SACT…IRSH, YTCT…VRSH, FKCT…LRFH, TTCS…FRVH, FTCT…SYLH, YTCT…SYLH, and FTCT…SHTH.

This sequence belongs to the krueppel C2H2-type zinc-finger protein family.

Its subcellular location is the nucleus. In terms of biological role, may be involved in transcriptional regulation. In Xenopus laevis (African clawed frog), this protein is Gastrula zinc finger protein XlCGF28.1.